A 119-amino-acid polypeptide reads, in one-letter code: Large ribosomal subunit protein uL24 (119 aa).

Belongs to the universal ribosomal protein uL24 family. As to quaternary structure, part of the 50S ribosomal subunit.

One of two assembly initiator proteins, it binds directly to the 5'-end of the 23S rRNA, where it nucleates assembly of the 50S subunit. In terms of biological role, one of the proteins that surrounds the polypeptide exit tunnel on the outside of the subunit. In Arthrobacter sp. (strain FB24), this protein is Large ribosomal subunit protein uL24.